Reading from the N-terminus, the 575-residue chain is Probable ferredoxin/ferredoxin--NADP reductase (575 aa).

2 4Fe-4S ferredoxin-type domains span residues proline 2–aspartate 29 and glutamate 37–arginine 66. Cysteine 9, cysteine 15, cysteine 19, cysteine 46, cysteine 49, cysteine 52, and cysteine 56 together coordinate [4Fe-4S] cluster. The interval valine 115–leucine 575 is ferredoxin--NADP reductase. FAD-binding residues include alanine 123, glutamate 143, leucine 151, and isoleucine 187. Residues arginine 213, asparagine 258–valine 261, arginine 302–arginine 303, and glutamate 314 contribute to the NADP(+) site. FAD is bound by residues tryptophan 456 and glycine 463–isoleucine 465. Residue glycine 463 coordinates NADP(+).

The protein in the C-terminal section; belongs to the ferredoxin--NADP reductase family. [4Fe-4S] cluster is required as a cofactor. It depends on FAD as a cofactor.

The enzyme catalyses 2 reduced [2Fe-2S]-[ferredoxin] + NADP(+) + H(+) = 2 oxidized [2Fe-2S]-[ferredoxin] + NADPH. The polypeptide is Probable ferredoxin/ferredoxin--NADP reductase (fprB) (Mycobacterium bovis (strain ATCC BAA-935 / AF2122/97)).